The chain runs to 379 residues: Wnt inhibitory factor 1 (379 aa).

The first 28 residues, M1–A28, serve as a signal peptide directing secretion. One can recognise a WIF domain in the interval L38–C177. N-linked (GlcNAc...) asparagine glycosylation occurs at N88. 7 cysteine pairs are disulfide-bonded: C140–C177, C182–C192, C186–C198, C200–C209, C214–C224, C218–C230, and C232–C241. EGF-like domains lie at Q178–E210, K211–D242, K243–E271, E274–S306, and K307–N338. N245 carries N-linked (GlcNAc...) asparagine glycosylation. 8 disulfide bridges follow: C246/C256, C250/C262, C278/C288, C282/C294, C296/C305, C310/C320, C314/C326, and C328/C337. Residues A354–W379 form a disordered region. Residues K364–P373 show a composition bias toward basic and acidic residues.

As to quaternary structure, interacts with MYOC.

It is found in the secreted. Binds to WNT proteins and inhibits their activities. May be involved in mesoderm segmentation. This Homo sapiens (Human) protein is Wnt inhibitory factor 1 (WIF1).